The chain runs to 352 residues: Photosystem II D2 protein (352 aa).

Residues 40 to 60 (CAFLSIGGWLTGTTFVTSWYT) form a helical membrane-spanning segment. Position 117 (histidine 117) interacts with chlorophyll a. The chain crosses the membrane as a helical span at residues 124–140 (GFCLRQIEIARLVGIRP). Pheophytin a is bound by residues glutamine 129 and asparagine 142. The helical transmembrane segment at 152-165 (VFVSVFLMYPLGQS) threads the bilayer. A chlorophyll a-binding site is contributed by histidine 197. A helical transmembrane segment spans residues 207–227 (GALLCAIHGATVENTLFQDGE). Residues histidine 214 and phenylalanine 261 each contribute to the a plastoquinone site. Histidine 214 provides a ligand contact to Fe cation. Position 268 (histidine 268) interacts with Fe cation. The chain crosses the membrane as a helical span at residues 278–294 (GLWMSSIGIVGLAFNLR).

Belongs to the reaction center PufL/M/PsbA/D family. In terms of assembly, PSII is composed of 1 copy each of membrane proteins PsbA, PsbB, PsbC, PsbD, PsbE, PsbF, PsbH, PsbI, PsbJ, PsbK, PsbL, PsbM, PsbT, PsbX, PsbY, PsbZ, Psb30/Ycf12, peripheral proteins PsbO, CyanoQ (PsbQ), PsbU, PsbV and a large number of cofactors. It forms dimeric complexes. The D1/D2 heterodimer binds P680, chlorophylls that are the primary electron donor of PSII, and subsequent electron acceptors. It shares a non-heme iron and each subunit binds pheophytin, quinone, additional chlorophylls, carotenoids and lipids. There is also a Cl(-1) ion associated with D1 and D2, which is required for oxygen evolution. The PSII complex binds additional chlorophylls, carotenoids and specific lipids. is required as a cofactor.

It is found in the cellular thylakoid membrane. The enzyme catalyses 2 a plastoquinone + 4 hnu + 2 H2O = 2 a plastoquinol + O2. Its function is as follows. Photosystem II (PSII) is a light-driven water:plastoquinone oxidoreductase that uses light energy to abstract electrons from H(2)O, generating O(2) and a proton gradient subsequently used for ATP formation. It consists of a core antenna complex that captures photons, and an electron transfer chain that converts photonic excitation into a charge separation. The D1/D2 (PsbA/PsbD) reaction center heterodimer binds P680, the primary electron donor of PSII as well as several subsequent electron acceptors. D2 is needed for assembly of a stable PSII complex. The sequence is that of Photosystem II D2 protein from Trichodesmium erythraeum (strain IMS101).